A 158-amino-acid polypeptide reads, in one-letter code: Ribonuclease H (158 aa).

The RNase H type-1 domain maps to 3–144 (ELKLIHIFTD…CDQLARAAAE (142 aa)). Mg(2+) contacts are provided by Asp12, Glu50, Asp72, and Asp136.

Belongs to the RNase H family. As to quaternary structure, monomer. Mg(2+) is required as a cofactor.

The protein resides in the cytoplasm. The enzyme catalyses Endonucleolytic cleavage to 5'-phosphomonoester.. Its function is as follows. Endonuclease that specifically degrades the RNA of RNA-DNA hybrids. The sequence is that of Ribonuclease H from Shewanella sp. (strain MR-4).